The chain runs to 623 residues: MTRAIVESIKKRFHELDPCTNSNYSKFKVIHTDLTLTVSFESKTLDGTVVYDLKNLDNASEVILDTSALNIKSTKVNGKEVSFELKPVTPIYGAPLRIPINPNESEIQVEISFTTTDKCTAIQFIQGDTGPYVFSQCEAIHARSLFPCFDTPAVKSPYKFTGHSPAVVTMSGRAQPTDEPNTYHFDQPIPIPSYLVSITSGNLLKAPIGPRSDVYSEEPSLKKCQWEFEKDMENFIQIAEKIVFEYEWSRFDSLVLPSSFPYGGMEIPNMTQLTPTLISGDRTQTKVMAHELAHSWSGNLVTNSSWEHFWLNEGWTVYLERRIIGAIAAAEAKEEGRKDAEKYGEQVRHFNMINGWNELADTCETFDKRYTKLVLDLENGDPDDSFSRIPYEKGFFFLYHLETKLGGIKEFDPFIKYYFNKFKYQSLNTAQFVDTLYEFYEPKGKAEILDNIDWETWLFVSGLPEKPEFDVTLANQVYALVDKWVAYVKNGGELPGDETADFEGEQDMLFLETLTEKFKTLDVKPEIIRLFPEIYPKYGASKNGEIISRWNELLISYGKYSSQDKLVQSFASWLGTIGRMKYVRPGYLLLRKGISHEFALEVFKKYEHIYHPICRTMVKKDLS.

Residues Gln136–Glu138 and Pro261–Glu266 each bind a peptide. Position 290 (His290) interacts with Zn(2+). The active-site Proton acceptor is the Glu291. The Zn(2+) site is built by His294 and Glu313. Tyr391 functions as the Proton donor in the catalytic mechanism.

The protein belongs to the peptidase M1 family. It depends on Zn(2+) as a cofactor.

The protein resides in the cytoplasm. The protein localises to the nucleus. The catalysed reaction is an epoxide + H2O = an ethanediol. Aminopeptidase that preferentially cleaves di- and tripeptides. Also has low epoxide hydrolase activity (in vitro). Can hydrolyze the epoxide leukotriene LTA(4) but it forms preferentially 5,6-dihydroxy-7,9,11,14-eicosatetraenoic acid rather than the cytokine leukotriene B(4) as the product compared to the homologous mammalian enzyme (in vitro). This Candida albicans (strain SC5314 / ATCC MYA-2876) (Yeast) protein is Leucine aminopeptidase 2 (LKH1).